Consider the following 447-residue polypeptide: ATP-dependent protease ATPase subunit HslU (447 aa).

ATP-binding positions include Ile17 and 59–64 (GVGKTE). Positions 136 to 160 (PPARGGFQGEPTAEEKPTEKKESAT) are disordered. Basic and acidic residues predominate over residues 148 to 159 (AEEKPTEKKESA). The ATP site is built by Asp260, Glu325, and Arg397.

Belongs to the ClpX chaperone family. HslU subfamily. A double ring-shaped homohexamer of HslV is capped on each side by a ring-shaped HslU homohexamer. The assembly of the HslU/HslV complex is dependent on binding of ATP.

Its subcellular location is the cytoplasm. ATPase subunit of a proteasome-like degradation complex; this subunit has chaperone activity. The binding of ATP and its subsequent hydrolysis by HslU are essential for unfolding of protein substrates subsequently hydrolyzed by HslV. HslU recognizes the N-terminal part of its protein substrates and unfolds these before they are guided to HslV for hydrolysis. The protein is ATP-dependent protease ATPase subunit HslU of Coxiella burnetii (strain RSA 331 / Henzerling II).